A 187-amino-acid chain; its full sequence is Ribosome-recycling factor (187 aa).

This sequence belongs to the RRF family.

The protein resides in the cytoplasm. Responsible for the release of ribosomes from messenger RNA at the termination of protein biosynthesis. May increase the efficiency of translation by recycling ribosomes from one round of translation to another. This chain is Ribosome-recycling factor, found in Methylorubrum extorquens (strain CM4 / NCIMB 13688) (Methylobacterium extorquens).